We begin with the raw amino-acid sequence, 216 residues long: Small ribosomal subunit protein uS5 (216 aa).

Residues 1–55 are disordered; sequence MDKKLENQKDLLNQDPKVELNSQSVAKNPLNSREVKPIQRRRPLRKNARDKNSKP. Positions 20 to 31 are enriched in polar residues; sequence LNSQSVAKNPLN. The S5 DRBM domain occupies 57–120; that stretch reads FEERVIAIHR…KDAQNRLVSV (64 aa).

The protein belongs to the universal ribosomal protein uS5 family. As to quaternary structure, part of the 30S ribosomal subunit. Contacts proteins S4 and S8.

With S4 and S12 plays an important role in translational accuracy. In terms of biological role, located at the back of the 30S subunit body where it stabilizes the conformation of the head with respect to the body. This Mesomycoplasma hyopneumoniae (strain 7448) (Mycoplasma hyopneumoniae) protein is Small ribosomal subunit protein uS5.